The chain runs to 647 residues: DEAD-box ATP-dependent RNA helicase 18 (647 aa).

The Q motif motif lies at 23–51; that stretch reads FSELSPALSPEVVKALKGGGFRRCTPVQA. In terms of domain architecture, Helicase ATP-binding spans 54-232; it reads IPLLLSHKDV…KAGLRNPVRV (179 aa). 67-74 provides a ligand contact to ATP; that stretch reads AATGSGKT. Residues 180–183 carry the DEAD box motif; sequence DEAD. The 157-residue stretch at 274 to 430 folds into the Helicase C-terminal domain; it reads QLVDFLVQNN…DIVPQIRSAA (157 aa). The stretch at 507-582 forms a coiled coil; sequence KYKDKAREKQ…RLLKKLKRGV (76 aa). A compositionally biased stretch (basic and acidic residues) spans 512 to 545; the sequence is AREKQRQKTLKRKAEELALRPEIEKRRKAPEKPE. Disordered regions lie at residues 512–565 and 590–647; these read AREK…KEDM and KLTG…TRRR. Residues 596–610 show a composition bias toward acidic residues; that stretch reads ESDDDDSSDGGDSDL. The span at 619 to 633 shows a compositional bias: basic residues; that stretch reads KVLKKIKQKGKAKGS.

The protein belongs to the DEAD box helicase family. DDX55/SPB4 subfamily. Interacts with BRI1. Phosphorylated.

The catalysed reaction is ATP + H2O = ADP + phosphate + H(+). In Oryza sativa subsp. japonica (Rice), this protein is DEAD-box ATP-dependent RNA helicase 18.